Here is a 555-residue protein sequence, read N- to C-terminus: CCR4-NOT transcription complex subunit 6-like (555 aa).

A required for interaction with CNOT1, CNOT3 and CNOT7 region spans residues 1–152 (MRLIGMPKEK…NLYQDPDGTR (152 aa)). LRR repeat units lie at residues 57 to 78 (HLTA…IAKL), 80 to 101 (NLVY…LGNM), 103 to 125 (SLRE…GRLF), and 126 to 148 (QLQT…YQDP). A nuclease domain region spans residues 158–555 (MLDNLAVHPE…VNGVHLPNRR (398 aa)). Glu240 contacts Mg(2+). Substrate-binding residues include Glu240, Glu276, His360, and Pro365. Asp410 contributes to the Mg(2+) binding site. Asp410 (proton donor/acceptor) is an active-site residue. Substrate-binding residues include Asn412, Asn479, and Phe484.

This sequence belongs to the CCR4/nocturin family. As to quaternary structure, component of the CCR4-NOT complex; distinct complexes seem to exist that differ in the participation of probably mutually exclusive catalytic subunits; the complex contains two deadenylase subunits, CNOT6 or CNOT6L, and CNOT7 or CNOT8. Interacts with CNOT1, CNOT3, CNOT7, CNOT8 and CNOT9. Interacts with TOB1. Interacts with NANOS2. Interacts with ZFP36. Interacts with ZFP36L2. Interacts with RBM46. Mg(2+) serves as cofactor. Highly expressed in placenta, skeletal muscle, pancreas, testis and leukocytes. Weakly expressed in heart, spleen and thymus.

The protein resides in the cytoplasm. It is found in the nucleus. It carries out the reaction Exonucleolytic cleavage of poly(A) to 5'-AMP.. Its activity is regulated as follows. Inhibited by free AMP, and with lesser efficiency also by CMP, GMP, UMP, ATP and neomycin. Has 3'-5' poly(A) exoribonuclease activity for synthetic poly(A) RNA substrate. Catalytic component of the CCR4-NOT complex which is one of the major cellular mRNA deadenylases and is linked to various cellular processes including bulk mRNA degradation, miRNA-mediated repression, translational repression during translational initiation and general transcription regulation. Additional complex functions may be a consequence of its influence on mRNA expression. May be involved in the deadenylation-dependent degradation of mRNAs through the 3'-UTR AU-rich element-mediated mechanism. Involved in deadenylation-dependent degradation of CDKN1B mRNA. Its mRNA deadenylase activity can be inhibited by TOB1. Mediates cell proliferation and cell survival and prevents cellular senescence. The protein is CCR4-NOT transcription complex subunit 6-like (CNOT6L) of Homo sapiens (Human).